The sequence spans 411 residues: L-cysteine:1D-myo-inositol 2-amino-2-deoxy-alpha-D-glucopyranoside ligase (411 aa).

Residue Cys43 coordinates Zn(2+). L-cysteinyl-5'-AMP-binding positions include 43-46 (CGIT), Thr58, and 81-83 (NVT). The 'HIGH' region signature appears at 45-55 (ITPYDATHLGH). Residues 186 to 191 (QRGGDP) carry the 'ERGGDP' region motif. An L-cysteinyl-5'-AMP-binding site is contributed by Trp226. Residue Cys230 coordinates Zn(2+). An L-cysteinyl-5'-AMP-binding site is contributed by 248–250 (GSD). His255 serves as a coordination point for Zn(2+). Ile282 is a binding site for L-cysteinyl-5'-AMP. The 'KMSKS' region signature appears at 288 to 292 (KMSKS).

The protein belongs to the class-I aminoacyl-tRNA synthetase family. MshC subfamily. In terms of assembly, monomer. Zn(2+) is required as a cofactor.

It catalyses the reaction 1D-myo-inositol 2-amino-2-deoxy-alpha-D-glucopyranoside + L-cysteine + ATP = 1D-myo-inositol 2-(L-cysteinylamino)-2-deoxy-alpha-D-glucopyranoside + AMP + diphosphate + H(+). Catalyzes the ATP-dependent condensation of GlcN-Ins and L-cysteine to form L-Cys-GlcN-Ins. The sequence is that of L-cysteine:1D-myo-inositol 2-amino-2-deoxy-alpha-D-glucopyranoside ligase from Mycobacterium marinum (strain ATCC BAA-535 / M).